Reading from the N-terminus, the 226-residue chain is Peroxynitrite isomerase (226 aa).

A GXWXGXG motif is present at residues 21–27 (GSWEGQG). Residue His-191 participates in heme b binding. The segment at 201–226 (SAAEGRLAPGAERPRGAGGRKQGEQS) is disordered.

It belongs to the nitrobindin family. In terms of assembly, homodimer. The cofactor is heme b.

The catalysed reaction is peroxynitrite = nitrate. The protein operates within nitrogen metabolism. Functionally, heme-binding protein able to scavenge peroxynitrite and to protect free L-tyrosine against peroxynitrite-mediated nitration, by acting as a peroxynitrite isomerase that converts peroxynitrite to nitrate. Therefore, this protein likely plays a role in peroxynitrite sensing and in the detoxification of reactive nitrogen and oxygen species (RNS and ROS, respectively). Is able to bind nitric oxide (NO) in vitro, but may act as a sensor of peroxynitrite levels in vivo. This Micrococcus luteus (strain ATCC 4698 / DSM 20030 / JCM 1464 / CCM 169 / CCUG 5858 / IAM 1056 / NBRC 3333 / NCIMB 9278 / NCTC 2665 / VKM Ac-2230) (Micrococcus lysodeikticus) protein is Peroxynitrite isomerase.